Reading from the N-terminus, the 25-residue chain is Growth-blocking peptide (25 aa).

Cysteine 7 and cysteine 19 are joined by a disulfide. At glutamine 25 the chain carries Glutamine amide.

This sequence belongs to the GBP/PSP1/paralytic peptide family. As to expression, hemolymph.

Biogenic peptide that prevents, in lepidopteran, the onset of metamorphosis from larva to pupa. This growth-blocking peptide has repressive activity against juvenile hormone esterase. The protein is Growth-blocking peptide of Cotesia kariyai (Parasitic wasp).